A 75-amino-acid polypeptide reads, in one-letter code: Large ribosomal subunit protein bL31 (75 aa).

The protein belongs to the bacterial ribosomal protein bL31 family. Type A subfamily. As to quaternary structure, part of the 50S ribosomal subunit.

Its function is as follows. Binds the 23S rRNA. In Rhodopseudomonas palustris (strain BisB5), this protein is Large ribosomal subunit protein bL31.